The primary structure comprises 431 residues: Asparagine--tRNA ligase 1 (431 aa).

Belongs to the class-II aminoacyl-tRNA synthetase family. In terms of assembly, homodimer.

Its subcellular location is the cytoplasm. It catalyses the reaction tRNA(Asn) + L-asparagine + ATP = L-asparaginyl-tRNA(Asn) + AMP + diphosphate + H(+). In Lactiplantibacillus plantarum (strain ATCC BAA-793 / NCIMB 8826 / WCFS1) (Lactobacillus plantarum), this protein is Asparagine--tRNA ligase 1 (asnS1).